Reading from the N-terminus, the 453-residue chain is GTPase Der (453 aa).

EngA-type G domains follow at residues 4–169 (PVVA…PPTD) and 178–353 (INVA…EQHR). Residues 10–17 (GRPNVGKS), 57–61 (DTGGL), 120–123 (NKCE), 184–191 (GRPNVGKS), 231–235 (DTAGI), and 296–299 (NKWD) each bind GTP. A KH-like domain is found at 354 to 439 (RRVSTSVINE…PIRLLWRGKK (86 aa)).

The protein belongs to the TRAFAC class TrmE-Era-EngA-EngB-Septin-like GTPase superfamily. EngA (Der) GTPase family. In terms of assembly, associates with the 50S ribosomal subunit.

GTPase that plays an essential role in the late steps of ribosome biogenesis. The protein is GTPase Der of Cyanothece sp. (strain PCC 7425 / ATCC 29141).